Consider the following 522-residue polypeptide: MKFSAGAVLSWSSLLLASSVFAQQEAVAPEDSAVVKLATDSFNEYIQSHDLVLAEFFAPWCGHCKNMAPEYVKAAETLVEKNITLAQIDCTENQDLCMEHNIPGFPSLKIFKNSDVNNSIDYEGPRTAEAIVQFMIKQSQPAVAVVADLPAYLANETFVTPVIVQSGKIDADFNATFYSMANKHFNDYDFVSAENADDDFKLSIYLPSAMDEPVVYNGKKADIADADVFEKWLQVEALPYFGEIDGSVFAQYVESGLPLGYLFYNDEEELEEYKPLFTELAKKNRGLMNFVSIDARKFGRHAGNLNMKEQFPLFAIHDMTEDLKYGLPQLSEEAFDELSDKIVLESKAIESLVKDFLKGDASPIVKSQEIFENQDSSVFQLVGKNHDEIVNDPKKDVLVLYYAPWCGHCKRLAPTYQELADTYANATSDVLIAKLDHTENDVRGVVIEGYPTIVLYPGGKKSESVVYQGSRSLDSLFDFIKENGHFDVDGKALYEEAQEKAAEEADADAELADEEDAIHDEL.

Residues 1–28 (MKFSAGAVLSWSSLLLASSVFAQQEAVA) constitute a signal peptide (or 22). The region spanning 29–141 (PEDSAVVKLA…VQFMIKQSQP (113 aa)) is the Thioredoxin 1 domain. Residues cysteine 61 and cysteine 64 each act as nucleophile in the active site. Cysteine 61 and cysteine 64 are oxidised to a cystine. N-linked (GlcNAc...) asparagine glycosylation is found at asparagine 82, asparagine 117, asparagine 155, and asparagine 174. The Thioredoxin 2 domain occupies 356-485 (FLKGDASPIV…LFDFIKENGH (130 aa)). Active-site nucleophile residues include cysteine 406 and cysteine 409. A disulfide bond links cysteine 406 and cysteine 409. Asparagine 425 is a glycosylation site (N-linked (GlcNAc...) asparagine). The segment at 497 to 522 (AQEKAAEEADADAELADEEDAIHDEL) is disordered. Over residues 504 to 522 (EADADAELADEEDAIHDEL) the composition is skewed to acidic residues. Positions 519-522 (HDEL) match the Prevents secretion from ER motif.

Belongs to the protein disulfide isomerase family. As to quaternary structure, interacts with EPS1, KAR2 and MNL1. Post-translationally, the N-terminus is blocked.

The protein resides in the endoplasmic reticulum lumen. It carries out the reaction Catalyzes the rearrangement of -S-S- bonds in proteins.. In terms of biological role, protein disulfide isomerase of ER lumen required for formation of disulfide bonds in secretory and cell-surface proteins and which unscrambles non-native disulfide bonds. Forms a complex with MNL1 to process unfolded protein-bound Man8GlcNAc2 oligosaccharides to Man7GlcNAc2, promoting degradation in unfolded protein response. This is Protein disulfide-isomerase (PDI1) from Saccharomyces cerevisiae (strain ATCC 204508 / S288c) (Baker's yeast).